The primary structure comprises 118 residues: UPF0102 protein Francci3_3586 (118 aa).

This sequence belongs to the UPF0102 family.

This is UPF0102 protein Francci3_3586 from Frankia casuarinae (strain DSM 45818 / CECT 9043 / HFP020203 / CcI3).